Consider the following 297-residue polypeptide: Protease HtpX homolog (297 aa).

A run of 2 helical transmembrane segments spans residues Val14 to Leu34 and Tyr39 to Phe59. Zn(2+) is bound at residue His143. Glu144 is an active-site residue. His147 contributes to the Zn(2+) binding site. A run of 2 helical transmembrane segments spans residues Ile158–Trp178 and Gly193–Ala213. Glu225 provides a ligand contact to Zn(2+).

It belongs to the peptidase M48B family. It depends on Zn(2+) as a cofactor.

It is found in the cell membrane. The sequence is that of Protease HtpX homolog from Streptococcus equi subsp. equi (strain 4047).